Consider the following 88-residue polypeptide: Small ribosomal subunit protein bS18A (88 aa).

This sequence belongs to the bacterial ribosomal protein bS18 family. In terms of assembly, part of the 30S ribosomal subunit. Forms a tight heterodimer with protein bS6.

Binds as a heterodimer with protein bS6 to the central domain of the 16S rRNA, where it helps stabilize the platform of the 30S subunit. The polypeptide is Small ribosomal subunit protein bS18A (Mycolicibacterium gilvum (strain PYR-GCK) (Mycobacterium gilvum (strain PYR-GCK))).